Here is a 373-residue protein sequence, read N- to C-terminus: GDP-mannose 4,6 dehydratase 2 (373 aa).

Over residues 1–15 (MASENNGSRSDSESI) the composition is skewed to polar residues. The disordered stretch occupies residues 1-21 (MASENNGSRSDSESITAPKAD). NADP(+) is bound by residues 35-40 (GITGQD), R60, 91-92 (DL), 113-117 (LAAQS), and Y128. A substrate-binding site is contributed by S117. S162 serves as a coordination point for substrate. Residue S162 is part of the active site. Residues E164 and Y185 each act as nucleophile in the active site. Y185 is a binding site for substrate. Residue K189 coordinates NADP(+). N214 is a binding site for substrate. NADP(+)-binding residues include H215 and R220. Substrate contacts are provided by residues 220 to 228 (RGENFVTRK), G247, R253, and 314 to 317 (RPAE).

It belongs to the NAD(P)-dependent epimerase/dehydratase family. GDP-mannose 4,6-dehydratase subfamily. Homotetramer. Binds to GER1. The cofactor is NADP(+). As to expression, expressed in roots, flowers, siliques, leaves and stems. Not expressed in the root meristem and the proximal part of the elongation zone, or in emerging lateral roots. Expressed in trichomes and guard cells, and in pollen just before anthesis.

The catalysed reaction is GDP-alpha-D-mannose = GDP-4-dehydro-alpha-D-rhamnose + H2O. It participates in nucleotide-sugar biosynthesis; GDP-L-fucose biosynthesis via de novo pathway; GDP-L-fucose from GDP-alpha-D-mannose: step 1/2. Functionally, catalyzes the conversion of GDP-D-mannose to GDP-4-dehydro-6-deoxy-D-mannose. In Arabidopsis thaliana (Mouse-ear cress), this protein is GDP-mannose 4,6 dehydratase 2 (MUR1).